A 714-amino-acid chain; its full sequence is Polyribonucleotide nucleotidyltransferase (714 aa).

Residues D493 and D499 each contribute to the Mg(2+) site. One can recognise a KH domain in the interval 559 to 618; sequence PRIETTKIPADRIGELIGPGGKNIKAIQAESGADINIEEDGTVHIYAAKQEGLDRALELV. Residues 628 to 696 form the S1 motif domain; the sequence is GELYTGKIVS…DKGRVKMSIR (69 aa).

Belongs to the polyribonucleotide nucleotidyltransferase family. Mg(2+) is required as a cofactor.

Its subcellular location is the cytoplasm. The catalysed reaction is RNA(n+1) + phosphate = RNA(n) + a ribonucleoside 5'-diphosphate. In terms of biological role, involved in mRNA degradation. Catalyzes the phosphorolysis of single-stranded polyribonucleotides processively in the 3'- to 5'-direction. This Akkermansia muciniphila (strain ATCC BAA-835 / DSM 22959 / JCM 33894 / BCRC 81048 / CCUG 64013 / CIP 107961 / Muc) protein is Polyribonucleotide nucleotidyltransferase.